The primary structure comprises 444 residues: N-succinylarginine dihydrolase (444 aa).

Substrate-binding positions include 19 to 28 (SGLSVGNIAS), N110, and 137 to 138 (HR). E174 is a catalytic residue. R214 serves as a coordination point for substrate. H250 is a catalytic residue. Residues D252 and N362 each contribute to the substrate site. C368 serves as the catalytic Nucleophile.

This sequence belongs to the succinylarginine dihydrolase family. Homodimer.

It carries out the reaction N(2)-succinyl-L-arginine + 2 H2O + 2 H(+) = N(2)-succinyl-L-ornithine + 2 NH4(+) + CO2. Its pathway is amino-acid degradation; L-arginine degradation via AST pathway; L-glutamate and succinate from L-arginine: step 2/5. In terms of biological role, catalyzes the hydrolysis of N(2)-succinylarginine into N(2)-succinylornithine, ammonia and CO(2). The sequence is that of N-succinylarginine dihydrolase from Aliivibrio fischeri (strain MJ11) (Vibrio fischeri).